A 379-amino-acid polypeptide reads, in one-letter code: Probable malonyl-CoA-acyl carrier protein transacylase, mitochondrial (379 aa).

Residues 1–23 (MLAARRLLRSPRITGALSWSRWS) constitute a mitochondrion transit peptide. Residues Ser-158 and His-275 contribute to the active site.

Belongs to the type II malonyltransferase family.

It localises to the mitochondrion. The catalysed reaction is holo-[ACP] + malonyl-CoA = malonyl-[ACP] + CoA. It functions in the pathway lipid metabolism; fatty acid biosynthesis. Catalyzes the transfer of a malonyl moiety from malonyl-CoA to the free thiol group of the phosphopantetheine arm of the ACP protein. This suggests the existence of the biosynthesis of fatty acids in mitochondria. This is Probable malonyl-CoA-acyl carrier protein transacylase, mitochondrial from Drosophila melanogaster (Fruit fly).